We begin with the raw amino-acid sequence, 308 residues long: Ribosomal protein L11 methyltransferase (308 aa).

The S-adenosyl-L-methionine site is built by Thr160, Gly181, Asp203, and Asn245.

Belongs to the methyltransferase superfamily. PrmA family.

It localises to the cytoplasm. The enzyme catalyses L-lysyl-[protein] + 3 S-adenosyl-L-methionine = N(6),N(6),N(6)-trimethyl-L-lysyl-[protein] + 3 S-adenosyl-L-homocysteine + 3 H(+). In terms of biological role, methylates ribosomal protein L11. The chain is Ribosomal protein L11 methyltransferase from Thermoanaerobacter pseudethanolicus (strain ATCC 33223 / 39E) (Clostridium thermohydrosulfuricum).